The sequence spans 245 residues: tRNA1(Val) (adenine(37)-N6)-methyltransferase (245 aa).

The protein belongs to the methyltransferase superfamily. tRNA (adenine-N(6)-)-methyltransferase family.

It is found in the cytoplasm. It carries out the reaction adenosine(37) in tRNA1(Val) + S-adenosyl-L-methionine = N(6)-methyladenosine(37) in tRNA1(Val) + S-adenosyl-L-homocysteine + H(+). Its function is as follows. Specifically methylates the adenine in position 37 of tRNA(1)(Val) (anticodon cmo5UAC). This Escherichia coli (strain K12) protein is tRNA1(Val) (adenine(37)-N6)-methyltransferase (yfiC).